The primary structure comprises 313 residues: Elongation factor Ts (313 aa).

The involved in Mg(2+) ion dislocation from EF-Tu stretch occupies residues 82–85 (TDFV).

It belongs to the EF-Ts family.

The protein resides in the cytoplasm. Associates with the EF-Tu.GDP complex and induces the exchange of GDP to GTP. It remains bound to the aminoacyl-tRNA.EF-Tu.GTP complex up to the GTP hydrolysis stage on the ribosome. The polypeptide is Elongation factor Ts (Nostoc sp. (strain PCC 7120 / SAG 25.82 / UTEX 2576)).